Here is a 65-residue protein sequence, read N- to C-terminus: Large ribosomal subunit protein uL29 (65 aa).

This sequence belongs to the universal ribosomal protein uL29 family.

The chain is Large ribosomal subunit protein uL29 from Delftia acidovorans (strain DSM 14801 / SPH-1).